The following is a 64-amino-acid chain: MAKVCEICGKGPITGNNVSHAHNKTRRRWLPNLKKVRMVTASGATVRGKVCTRCIRSGAVVKPA.

This sequence belongs to the bacterial ribosomal protein bL28 family.

The chain is Large ribosomal subunit protein bL28 from Desulfotalea psychrophila (strain LSv54 / DSM 12343).